The chain runs to 400 residues: Tryptophan 2,3-dioxygenase (400 aa).

Substrate-binding positions include 75-79 (FIIIH) and Arg-146. His-332 is a binding site for heme. A substrate-binding site is contributed by Thr-346.

The protein belongs to the tryptophan 2,3-dioxygenase family. Homotetramer. Dimer of dimers. It depends on heme as a cofactor.

The catalysed reaction is L-tryptophan + O2 = N-formyl-L-kynurenine. The protein operates within amino-acid degradation; L-tryptophan degradation via kynurenine pathway; L-kynurenine from L-tryptophan: step 1/2. Heme-dependent dioxygenase that catalyzes the oxidative cleavage of the L-tryptophan (L-Trp) pyrrole ring and converts L-tryptophan to N-formyl-L-kynurenine. Catalyzes the oxidative cleavage of the indole moiety. This Dictyostelium discoideum (Social amoeba) protein is Tryptophan 2,3-dioxygenase.